Consider the following 196-residue polypeptide: Pyridoxine/pyridoxamine 5'-phosphate oxidase (196 aa).

Residues 46–51 (RNVLYK), 61–62 (FT), Arg67, Lys68, and Gln90 each bind FMN. Residue Lys51 participates in substrate binding. Positions 108, 112, and 116 each coordinate substrate. FMN is bound by residues 125–126 (QS) and Trp169. Position 175–177 (175–177 (RLH)) interacts with substrate. Arg179 is a binding site for FMN.

Belongs to the pyridoxamine 5'-phosphate oxidase family. As to quaternary structure, homodimer. FMN is required as a cofactor.

It carries out the reaction pyridoxamine 5'-phosphate + O2 + H2O = pyridoxal 5'-phosphate + H2O2 + NH4(+). The enzyme catalyses pyridoxine 5'-phosphate + O2 = pyridoxal 5'-phosphate + H2O2. It functions in the pathway cofactor metabolism; pyridoxal 5'-phosphate salvage; pyridoxal 5'-phosphate from pyridoxamine 5'-phosphate: step 1/1. It participates in cofactor metabolism; pyridoxal 5'-phosphate salvage; pyridoxal 5'-phosphate from pyridoxine 5'-phosphate: step 1/1. Functionally, catalyzes the oxidation of either pyridoxine 5'-phosphate (PNP) or pyridoxamine 5'-phosphate (PMP) into pyridoxal 5'-phosphate (PLP). This Coxiella burnetii (strain RSA 493 / Nine Mile phase I) protein is Pyridoxine/pyridoxamine 5'-phosphate oxidase.